A 116-amino-acid chain; its full sequence is Putative pterin-4-alpha-carbinolamine dehydratase (116 aa).

The protein belongs to the pterin-4-alpha-carbinolamine dehydratase family.

The catalysed reaction is (4aS,6R)-4a-hydroxy-L-erythro-5,6,7,8-tetrahydrobiopterin = (6R)-L-erythro-6,7-dihydrobiopterin + H2O. In Xylella fastidiosa (strain M12), this protein is Putative pterin-4-alpha-carbinolamine dehydratase.